A 377-amino-acid chain; its full sequence is UDP-N-acetylglucosamine 2-epimerase (377 aa).

Histidine 212 is a catalytic residue.

It belongs to the UDP-N-acetylglucosamine 2-epimerase family. In terms of assembly, homodimer.

The enzyme catalyses UDP-N-acetyl-alpha-D-glucosamine + H2O = aldehydo-N-acetyl-D-mannosamine + UDP + H(+). In terms of biological role, catalyzes the conversion of UDP-N-acetylglucosamine (UDP-GlcNAc) to UDP and N-acetyl-D-mannosamine (ManNAc). The protein is UDP-N-acetylglucosamine 2-epimerase (siaA) of Neisseria meningitidis serogroup B (strain ATCC BAA-335 / MC58).